The following is a 558-amino-acid chain: Formate--tetrahydrofolate ligase (558 aa).

Residue 67-74 (TPAGEGKT) coordinates ATP.

It belongs to the formate--tetrahydrofolate ligase family.

The catalysed reaction is (6S)-5,6,7,8-tetrahydrofolate + formate + ATP = (6R)-10-formyltetrahydrofolate + ADP + phosphate. It functions in the pathway one-carbon metabolism; tetrahydrofolate interconversion. The polypeptide is Formate--tetrahydrofolate ligase (Roseobacter denitrificans (strain ATCC 33942 / OCh 114) (Erythrobacter sp. (strain OCh 114))).